The chain runs to 477 residues: Trigger factor (477 aa).

The PPIase FKBP-type domain occupies 169-254; that stretch reads EDRVTIDYLG…VKEVAKPNEL (86 aa). Positions 435–477 are disordered; sequence VSKEELTAEDEDAASEAKPAKKAAPKKKAAPKKKADEGKSEEA. Over residues 454 to 466 the composition is skewed to basic residues; the sequence is AKKAAPKKKAAPK. Residues 467–477 show a composition bias toward basic and acidic residues; sequence KKADEGKSEEA.

This sequence belongs to the FKBP-type PPIase family. Tig subfamily.

It is found in the cytoplasm. It carries out the reaction [protein]-peptidylproline (omega=180) = [protein]-peptidylproline (omega=0). Its function is as follows. Involved in protein export. Acts as a chaperone by maintaining the newly synthesized protein in an open conformation. Functions as a peptidyl-prolyl cis-trans isomerase. The protein is Trigger factor of Brucella anthropi (strain ATCC 49188 / DSM 6882 / CCUG 24695 / JCM 21032 / LMG 3331 / NBRC 15819 / NCTC 12168 / Alc 37) (Ochrobactrum anthropi).